The chain runs to 29 residues: Brevinin-2Ed (29 aa).

An intrachain disulfide couples Cys23 to Cys29.

It belongs to the frog skin active peptide (FSAP) family. Brevinin subfamily. In terms of tissue distribution, expressed by the skin glands.

Its subcellular location is the secreted. Functionally, shows antibacterial activity against representative Gram-negative and Gram-positive bacterial species, and hemolytic activity. This chain is Brevinin-2Ed, found in Pelophylax lessonae (Pool frog).